The chain runs to 113 residues: MIVWMGVYDQRSKGKITKSISDLPGIHSSYMDLKEGTLVVMGDVDPVELVRNLRKKWGKAKLTLYVPYDALKEAKIAEAKQKREEIEREALYRYNREIRDIFNDKEEQGCVIC.

One can recognise an HMA domain in the interval methionine 1–tyrosine 65. Residues aspartate 69–glutamate 89 are a coiled coil. Cysteine methyl ester is present on cysteine 110. Cysteine 110 carries S-farnesyl cysteine lipidation. A propeptide spans valine 111 to cysteine 113 (removed in mature form).

Belongs to the HIPP family. Expressed in embryo sacs.

Probable heavy-metal-binding protein. This is Heavy metal-associated isoprenylated plant protein 15 from Arabidopsis thaliana (Mouse-ear cress).